A 300-amino-acid polypeptide reads, in one-letter code: Protoheme IX farnesyltransferase (300 aa).

9 consecutive transmembrane segments (helical) span residues 24–44, 48–68, 94–114, 118–138, 146–166, 172–192, 217–237, 239–259, and 278–298; these read VTQL…PGMV, VLLG…AINC, LQIL…LYTF, LTMW…TLLL, IVIG…AVTG, AWIL…VLAL, LHIL…FISG, SGAV…AYAW, and IVYL…RPVI.

It belongs to the UbiA prenyltransferase family. Protoheme IX farnesyltransferase subfamily.

It localises to the cell inner membrane. It catalyses the reaction heme b + (2E,6E)-farnesyl diphosphate + H2O = Fe(II)-heme o + diphosphate. The protein operates within porphyrin-containing compound metabolism; heme O biosynthesis; heme O from protoheme: step 1/1. In terms of biological role, converts heme B (protoheme IX) to heme O by substitution of the vinyl group on carbon 2 of heme B porphyrin ring with a hydroxyethyl farnesyl side group. This Burkholderia thailandensis (strain ATCC 700388 / DSM 13276 / CCUG 48851 / CIP 106301 / E264) protein is Protoheme IX farnesyltransferase.